The following is a 384-amino-acid chain: 1-deoxy-D-xylulose 5-phosphate reductoisomerase (384 aa).

T10, G11, S12, I13, R37, N38, and N124 together coordinate NADPH. K125 contributes to the 1-deoxy-D-xylulose 5-phosphate binding site. Residue E126 coordinates NADPH. D150 is a Mn(2+) binding site. The 1-deoxy-D-xylulose 5-phosphate site is built by S151, E152, S176, and H199. Residue E152 participates in Mn(2+) binding. G205 lines the NADPH pocket. Residues S212, N217, K218, and E221 each contribute to the 1-deoxy-D-xylulose 5-phosphate site. E221 lines the Mn(2+) pocket.

Belongs to the DXR family. Mg(2+) is required as a cofactor. The cofactor is Mn(2+).

The catalysed reaction is 2-C-methyl-D-erythritol 4-phosphate + NADP(+) = 1-deoxy-D-xylulose 5-phosphate + NADPH + H(+). Its pathway is isoprenoid biosynthesis; isopentenyl diphosphate biosynthesis via DXP pathway; isopentenyl diphosphate from 1-deoxy-D-xylulose 5-phosphate: step 1/6. In terms of biological role, catalyzes the NADPH-dependent rearrangement and reduction of 1-deoxy-D-xylulose-5-phosphate (DXP) to 2-C-methyl-D-erythritol 4-phosphate (MEP). This Clostridium perfringens (strain ATCC 13124 / DSM 756 / JCM 1290 / NCIMB 6125 / NCTC 8237 / Type A) protein is 1-deoxy-D-xylulose 5-phosphate reductoisomerase.